Consider the following 214-residue polypeptide: Probable transaldolase (214 aa).

Lysine 83 functions as the Schiff-base intermediate with substrate in the catalytic mechanism.

Belongs to the transaldolase family. Type 3B subfamily.

The protein resides in the cytoplasm. It carries out the reaction D-sedoheptulose 7-phosphate + D-glyceraldehyde 3-phosphate = D-erythrose 4-phosphate + beta-D-fructose 6-phosphate. It functions in the pathway carbohydrate degradation; pentose phosphate pathway; D-glyceraldehyde 3-phosphate and beta-D-fructose 6-phosphate from D-ribose 5-phosphate and D-xylulose 5-phosphate (non-oxidative stage): step 2/3. Transaldolase is important for the balance of metabolites in the pentose-phosphate pathway. The chain is Probable transaldolase from Dictyoglomus turgidum (strain DSM 6724 / Z-1310).